A 651-amino-acid chain; its full sequence is Translation initiation factor eIF2B subunit delta (651 aa).

The disordered stretch occupies residues 1-108 (MSESEAKSRS…NERNVKKSTL (108 aa)). At Ser2 the chain carries N-acetylserine. The segment covering 11–28 (ATPPSKAKQATPTTTAAA) has biased composition (low complexity). Basic and acidic residues-rich tracts occupy residues 30 to 49 (GEKK…EKAA) and 76 to 90 (KQLQ…EQKQ). Position 106 is a phosphoserine (Ser106). At Thr121 the chain carries Phosphothreonine. Residues 566-600 (AMENKPKGNKIGGKKGSEGESKDASNEEDSNSKNI) form a disordered region. Basic and acidic residues predominate over residues 580-590 (KGSEGESKDAS).

It belongs to the eIF-2B alpha/beta/delta subunits family. Component of the translation initiation factor 2B (eIF2B) complex which is a heterodecamer of two sets of five different subunits: alpha, beta, gamma, delta and epsilon. Subunits alpha, beta and delta comprise a regulatory subcomplex and subunits epsilon and gamma comprise a catalytic subcomplex. Within the complex, the hexameric regulatory complex resides at the center, with the two heterodimeric catalytic subcomplexes bound on opposite sides.

It is found in the cytoplasm. The protein resides in the cytosol. Functionally, acts as a component of the translation initiation factor 2B (eIF2B) complex, which catalyzes the exchange of GDP for GTP on the eukaryotic initiation factor 2 (eIF2) complex gamma subunit. Its guanine nucleotide exchange factor activity is repressed when bound to eIF2 complex phosphorylated on the alpha subunit, thereby limiting the amount of methionyl-initiator methionine tRNA available to the ribosome and consequently global translation is repressed. It activates the synthesis of GCN4 in yeast under amino acid starvation conditions by suppressing the inhibitory effects of multiple AUG codons present in the leader of GCN4 mRNA. It may promote either repression or activation of GCN4 expression depending on amino acid availability. GCD2 is also required for cell viability. Its function can partially be replaced by GCN3 under normal growth conditions in GCD2-defective mutants, under AA starvation conditions GCN3 is an antagonist (GCN4 translational activator). In Saccharomyces cerevisiae (strain ATCC 204508 / S288c) (Baker's yeast), this protein is Translation initiation factor eIF2B subunit delta (GCD2).